Consider the following 672-residue polypeptide: Acetoacetyl-CoA synthetase (672 aa).

It belongs to the ATP-dependent AMP-binding enzyme family.

It localises to the cytoplasm. The protein resides in the cytosol. The enzyme catalyses acetoacetate + ATP + CoA = acetoacetyl-CoA + AMP + diphosphate. Its function is as follows. Converts acetoacetate to acetoacetyl-CoA in the cytosol. Ketone body-utilizing enzyme, responsible for the synthesis of cholesterol and fatty acids. The polypeptide is Acetoacetyl-CoA synthetase (AACS) (Macaca fascicularis (Crab-eating macaque)).